Consider the following 218-residue polypeptide: N-(5'-phosphoribosyl)anthranilate isomerase (218 aa).

Belongs to the TrpF family.

It carries out the reaction N-(5-phospho-beta-D-ribosyl)anthranilate = 1-(2-carboxyphenylamino)-1-deoxy-D-ribulose 5-phosphate. The protein operates within amino-acid biosynthesis; L-tryptophan biosynthesis; L-tryptophan from chorismate: step 3/5. The protein is N-(5'-phosphoribosyl)anthranilate isomerase of Acetivibrio thermocellus (strain ATCC 27405 / DSM 1237 / JCM 9322 / NBRC 103400 / NCIMB 10682 / NRRL B-4536 / VPI 7372) (Clostridium thermocellum).